The chain runs to 216 residues: MKLNLVQIFFMLLMLLLGLGMGLGLGLHMATAVLEESDQPLNEFWSSDSQDKAEATEEGDGTQTTETLVLSNKEVVQPGWPEDPILGEDEVGGNKMLRASALFQSNKDYLRLDQTDRECNDMMAHKMKEPSQSCIAQYAFIHEDLNTVKAVCNSPVIACELKGGKCHKSSRPFDLTLCELSQPDQVTPNCNYLTSVIKKHIIITCNDMKRQLPTGQ.

The N-terminal stretch at 1–26 is a signal peptide; it reads MKLNLVQIFFMLLMLLLGLGMGLGLG. Residues 43 to 65 are disordered; the sequence is EFWSSDSQDKAEATEEGDGTQTT.

It belongs to the pancreatic ribonuclease family. The N-terminus is blocked. Glycosylated.

Its subcellular location is the secreted. Its function is as follows. Secreted proximal epididymal protein required for post-testicular sperm maturation and male fertility. May be involved in sperm adhesion to the egg zona pellucida. Does not have ribonuclease activity. This is Inactive ribonuclease-like protein 10 (RNASE10) from Homo sapiens (Human).